The chain runs to 331 residues: MNEPTYNYNDFLMPALADGQPDISIEISEITKKQWNQLIGIHEVVVYKDCRKLFPAAKFSVRGLDPALLYSVEICFDVLSPFTFSYNKKLEKWIPTKTPVNCQSSALSSMICETGDWFMNGDMDFGALNITSSHEKAKEKIEQNRIAVCLSSRTMYQIRVVLYEMQNDELIYLKETKFDEMIFITCTEYRGQVNRELKKSMNRFSRKRKYEISGTKCQRSKRPAKLPVESLDEKELKNAEKGIMSLLESSPSSPSYLYQYQYNSPQSIPSSIYDSLYPSSPEEYQMVHTFPQTDQLSPSFQTSPTVHYDFYNQQYYDNSFHENYFQSYNRL.

A DNA-binding region (T-box) is located at residues 29–210 (EITKKQWNQL…MNRFSRKRKY (182 aa)).

The protein resides in the nucleus. In Caenorhabditis elegans, this protein is Putative T-box protein 36 (tbx-36).